The sequence spans 219 residues: Protein OPG170 (219 aa).

Residues 1 to 16 (MYSLVFVILMCIPFSF) form the signal peptide. An N-linked (GlcNAc...) asparagine; by host glycan is attached at Asn70.

Belongs to the orthopoxvirus OPG170 family.

Its subcellular location is the secreted. Its function is as follows. May interact with several cellular chemokines to interfere with chemokine-glycosaminoglycan (GAG) interactions at the cell surface to alter chemotaxis of nearby responsive cells. The protein is Protein OPG170 (OPG170) of Bos taurus (Bovine).